Here is a 215-residue protein sequence, read N- to C-terminus: Oligoribonuclease (215 aa).

Residues 5 to 170 (LVWIDCEMTG…ADIHESIREL (166 aa)) enclose the Exonuclease domain. The active site involves Tyr127.

This sequence belongs to the oligoribonuclease family.

Its subcellular location is the cytoplasm. In terms of biological role, 3'-to-5' exoribonuclease specific for small oligoribonucleotides. The sequence is that of Oligoribonuclease from Mycobacterium leprae (strain TN).